A 120-amino-acid chain; its full sequence is MFLLTGYEYFLGFLLIAAAVPILALVTNLIVAPKGRTGERKLTYESGMEPIGGAWIQFNIRYYMFALVFVIFDVETVFLYPWAVAFNRLGLLAFIEALIFIAILVIALAYAWRKGALEWS.

A run of 3 helical transmembrane segments spans residues 10–30 (FLGFLLIAAAVPILALVTNLI), 64–84 (MFALVFVIFDVETVFLYPWAV), and 89–109 (LGLLAFIEALIFIAILVIALA).

It belongs to the complex I subunit 3 family. As to quaternary structure, NDH-1 can be composed of about 15 different subunits; different subcomplexes with different compositions have been identified which probably have different functions.

The protein localises to the cellular thylakoid membrane. It carries out the reaction a plastoquinone + NADH + (n+1) H(+)(in) = a plastoquinol + NAD(+) + n H(+)(out). The catalysed reaction is a plastoquinone + NADPH + (n+1) H(+)(in) = a plastoquinol + NADP(+) + n H(+)(out). In terms of biological role, NDH-1 shuttles electrons from an unknown electron donor, via FMN and iron-sulfur (Fe-S) centers, to quinones in the respiratory and/or the photosynthetic chain. The immediate electron acceptor for the enzyme in this species is believed to be plastoquinone. Couples the redox reaction to proton translocation, and thus conserves the redox energy in a proton gradient. Cyanobacterial NDH-1 also plays a role in inorganic carbon-concentration. The chain is NAD(P)H-quinone oxidoreductase subunit 3 from Prochlorococcus marinus (strain MIT 9312).